The chain runs to 529 residues: Cytochrome P450 monooxygenase ausG (529 aa).

A helical transmembrane segment spans residues 31 to 51; sequence LLVVCGLPGLLLLFFVTAILL. Cys-470 contacts heme.

It belongs to the cytochrome P450 family. Heme serves as cofactor.

The protein localises to the membrane. It functions in the pathway secondary metabolite biosynthesis; terpenoid biosynthesis. In terms of biological role, cytochrome P450 monooxygenase; part of the gene cluster that mediates the biosynthesis of calidodehydroaustin, a fungal meroterpenoid. The first step of the pathway is the synthesis of 3,5-dimethylorsellinic acid by the polyketide synthase ausA. 3,5-dimethylorsellinic acid is then prenylated by the polyprenyl transferase ausN. Further epoxidation by the FAD-dependent monooxygenase ausM and cyclization by the probable terpene cyclase ausL lead to the formation of protoaustinoid A. Protoaustinoid A is then oxidized to spiro-lactone preaustinoid A3 by the combined action of the FAD-binding monooxygenases ausB and ausC, and the dioxygenase ausE. Acid-catalyzed keto-rearrangement and ring contraction of the tetraketide portion of preaustinoid A3 by ausJ lead to the formation of preaustinoid A4. The aldo-keto reductase ausK, with the help of ausH, is involved in the next step by transforming preaustinoid A4 into isoaustinone which is in turn hydroxylated by the P450 monooxygenase ausI to form austinolide. The cytochrome P450 monooxygenase ausG modifies austinolide to austinol. Austinol is further acetylated to austin by the O-acetyltransferase ausP, which spontaneously changes to dehydroaustin. The cytochrome P450 monooxygenase ausR then converts dehydroaustin is into 7-dehydrodehydroaustin. The hydroxylation catalyzed by ausR permits the O-acetyltransferase ausQ to add an additional acetyl group to the molecule, leading to the formation of acetoxydehydroaustin. The short chain dehydrogenase ausT catalyzes the reduction of the double bond present between carbon atoms 1 and 2 to convert 7-dehydrodehydroaustin into 1,2-dihydro-7-hydroxydehydroaustin. AusQ catalyzes not only an acetylation reaction but also the addition of the PKS ausV diketide product to 1,2-dihydro-7-hydroxydehydroaustin, forming precalidodehydroaustin. Finally, the iron/alpha-ketoglutarate-dependent dioxygenase converts precalidodehydroaustin into calidodehydroaustin. This is Cytochrome P450 monooxygenase ausG from Aspergillus calidoustus.